The sequence spans 101 residues: Apolipoprotein C-II (101 aa).

The N-terminal stretch at 1-22 is a signal peptide; sequence MGTRFLLALFLVLLVLGFEVQG. The tract at residues 66-74 is lipid binding; the sequence is TVDEKLRDM. A lipoprotein lipase cofactor region spans residues 78-101; that stretch reads STAAMSTYAGILTDQVLSMLKGEE.

Belongs to the apolipoprotein C2 family. Post-translationally, proapolipoprotein C-II is synthesized as a sialic acid containing glycoprotein which is subsequently desialylated prior to its proteolytic processing. In terms of processing, proapolipoprotein C-II, the major form found in plasma undergoes proteolytic cleavage of its N-terminal hexapeptide to generate apolipoprotein C-II, which occurs as the minor form in plasma.

Its subcellular location is the secreted. Component of chylomicrons, very low-density lipoproteins (VLDL), low-density lipoproteins (LDL), and high-density lipoproteins (HDL) in plasma. Plays an important role in lipoprotein metabolism as an activator of lipoprotein lipase. Both proapolipoprotein C-II and apolipoprotein C-II can activate lipoprotein lipase. The protein is Apolipoprotein C-II (APOC2) of Plecturocebus moloch (Dusky titi monkey).